The following is a 632-amino-acid chain: MASAPEVESVKTPDPASTKTQHTSIAEIHTADQTWNNESNTRLPPNHRHHLRDTRYDPWTHNGSPPAEISKIPPRAKVLILGAGYGGLLFAVRLLEAGFQPSDILLVDAAHGFGGTWYWNRYPGLMCDIESYIYMPLLEETGYIPSAKYVPGEELRSHAERIAQHWGLGTRTGFGVRVEELRWDEKGIRWDVRGGRTQDPTMRWTCTADFVIIATGTLNRPRVPDLAGLDMFTGHVFHTARWDYNYTGGAPGTPALPRLDGKRVAVIGTGSTAIQIIPQLAKSAEQLFVFQRTPASVGLQRNRPTDREWWEKTIQNAAPGWQRRRAENFNAWISTPHEVLGIEEDLISDGWTSAPSFAAAIGGPLNLAPDFLHRATEVDAARRRIVHQVIETTVKDRRTAEALLNHAHGWCKRPCFHEGYFETYNLANTLLVDARDHQLHLTHDGVQVGDTVYPVDLIVLATGYELGSLCPATRAQVRIVGVGGQQMEEKWARPATLHGIMTRGFPNLFFPGTSQAGVTANQSYMFDRAAEHVAYILHALCLRRGTETRLRLQPTVEAEEQWATRSVDQARAFAATRACAVGSYTIAARYESADGAALARHLPWGEGMASYVRVLEQWREAGTMEGLEIVSE.

The interval 1-50 is disordered; the sequence is MASAPEVESVKTPDPASTKTQHTSIAEIHTADQTWNNESNTRLPPNHRHH. 2 stretches are compositionally biased toward polar residues: residues 15-24 and 31-43; these read PASTKTQHTS and ADQT…NTRL. FAD contacts are provided by residues 116–119, 128–129, and Y134; these read TWYW and DI. 126–128 is an NADP(+) binding site; it reads MCD. NADP(+) contacts are provided by residues 269 to 275 and 292 to 293; these read TGSTAIQ and RT.

The protein belongs to the FAD-binding monooxygenase family. FAD is required as a cofactor.

The catalysed reaction is protoaustinoid A + AH2 + O2 = berkeleyone A + A + H2O. The protein operates within secondary metabolite biosynthesis; terpenoid biosynthesis. Its function is as follows. FAD-binding monooxygenase; part of the gene cluster that mediates the biosynthesis of calidodehydroaustin, a fungal meroterpenoid. The first step of the pathway is the synthesis of 3,5-dimethylorsellinic acid by the polyketide synthase ausA. 3,5-dimethylorsellinic acid is then prenylated by the polyprenyl transferase ausN. Further epoxidation by the FAD-dependent monooxygenase ausM and cyclization by the probable terpene cyclase ausL lead to the formation of protoaustinoid A. Protoaustinoid A is then oxidized to spiro-lactone preaustinoid A3 by the combined action of the FAD-binding monooxygenases ausB and ausC, and the dioxygenase ausE. Acid-catalyzed keto-rearrangement and ring contraction of the tetraketide portion of preaustinoid A3 by ausJ lead to the formation of preaustinoid A4. The aldo-keto reductase ausK, with the help of ausH, is involved in the next step by transforming preaustinoid A4 into isoaustinone which is in turn hydroxylated by the P450 monooxygenase ausI to form austinolide. The cytochrome P450 monooxygenase ausG modifies austinolide to austinol. Austinol is further acetylated to austin by the O-acetyltransferase ausP, which spontaneously changes to dehydroaustin. The cytochrome P450 monooxygenase ausR then converts dehydroaustin is into 7-dehydrodehydroaustin. The hydroxylation catalyzed by ausR permits the O-acetyltransferase ausQ to add an additional acetyl group to the molecule, leading to the formation of acetoxydehydroaustin. The short chain dehydrogenase ausT catalyzes the reduction of the double bond present between carbon atoms 1 and 2 to convert 7-dehydrodehydroaustin into 1,2-dihydro-7-hydroxydehydroaustin. AusQ catalyzes not only an acetylation reaction but also the addition of the PKS ausV diketide product to 1,2-dihydro-7-hydroxydehydroaustin, forming precalidodehydroaustin. Finally, the iron/alpha-ketoglutarate-dependent dioxygenase converts precalidodehydroaustin into calidodehydroaustin. This is FAD-binding monooxygenase ausB from Aspergillus calidoustus.